The chain runs to 341 residues: MNHIPMQNKKVTVSVIGASGYSGAELVKLLMKHPGIVIEELYAHTQAGKRFTELYPSIPCDKTFQTYAGQTNSDVYLLALPHGEALQLVPGIVAAGKKVIDLSGDFRLKNTAEHKRFYGGDKSAEDVLQYGMPELFRDEIAGSTAISNPGCYATSIILGLAPLFLGGMAGLDVESVNVTAVSGISGAGRSAKLELSFSEMSGNMRAYKVGKHQHTPEIMQTLGTSVTDPSFRFVFTPMIAPYVRGIYSVLNVRLASPVAMEPVRELYAGFYANAPFVRLRDGVTEVSHVAYTNFCDISLAFESDGSLVIITAIDNLVKGAAGQAVQNMNLMLGFGETTALL.

Cys-151 is an active-site residue.

It belongs to the NAGSA dehydrogenase family. Type 1 subfamily.

It is found in the cytoplasm. It catalyses the reaction N-acetyl-L-glutamate 5-semialdehyde + phosphate + NADP(+) = N-acetyl-L-glutamyl 5-phosphate + NADPH + H(+). Its pathway is amino-acid biosynthesis; L-arginine biosynthesis; N(2)-acetyl-L-ornithine from L-glutamate: step 3/4. Its function is as follows. Catalyzes the NADPH-dependent reduction of N-acetyl-5-glutamyl phosphate to yield N-acetyl-L-glutamate 5-semialdehyde. The protein is N-acetyl-gamma-glutamyl-phosphate reductase of Chlorobaculum tepidum (strain ATCC 49652 / DSM 12025 / NBRC 103806 / TLS) (Chlorobium tepidum).